A 198-amino-acid polypeptide reads, in one-letter code: uncharacterized protein (198 aa).

Positions 1–23 (MYFGKTRQSDQSGRVPPNQNVTT) are disordered. Residues 9 to 23 (SDQSGRVPPNQNVTT) are compositionally biased toward polar residues. Residues cysteine 75, histidine 144, and arginine 149 each contribute to the Mo-molybdopterin site.

The cofactor is Mo-molybdopterin.

This is an uncharacterized protein from Bacillus subtilis (strain 168).